A 196-amino-acid polypeptide reads, in one-letter code: Glycerol-3-phosphate acyltransferase (196 aa).

The next 5 membrane-spanning stretches (helical) occupy residues 1–21 (MGFIIGFLLSVFGYLLGSILF), 53–73 (KYGALVFLLDAFKGFLIAILD), 76–96 (YIDPSSLWFGIVMVSPVIGHI), 115–135 (VVFGISPLLALKMFLVWAFVF), and 141–161 (VSLASITSVLVGYFLFLEGDF).

This sequence belongs to the PlsY family. As to quaternary structure, probably interacts with PlsX.

It is found in the cell inner membrane. It catalyses the reaction an acyl phosphate + sn-glycerol 3-phosphate = a 1-acyl-sn-glycero-3-phosphate + phosphate. Its pathway is lipid metabolism; phospholipid metabolism. Its function is as follows. Catalyzes the transfer of an acyl group from acyl-phosphate (acyl-PO(4)) to glycerol-3-phosphate (G3P) to form lysophosphatidic acid (LPA). This enzyme utilizes acyl-phosphate as fatty acyl donor, but not acyl-CoA or acyl-ACP. The protein is Glycerol-3-phosphate acyltransferase of Hydrogenobaculum sp. (strain Y04AAS1).